Here is a 174-residue protein sequence, read N- to C-terminus: Large ribosomal subunit protein uL10 (174 aa).

Belongs to the universal ribosomal protein uL10 family. In terms of assembly, part of the ribosomal stalk of the 50S ribosomal subunit. The N-terminus interacts with L11 and the large rRNA to form the base of the stalk. The C-terminus forms an elongated spine to which L12 dimers bind in a sequential fashion forming a multimeric L10(L12)X complex.

Functionally, forms part of the ribosomal stalk, playing a central role in the interaction of the ribosome with GTP-bound translation factors. The protein is Large ribosomal subunit protein uL10 of Synechococcus sp. (strain RCC307).